A 238-amino-acid polypeptide reads, in one-letter code: Small ribosomal subunit protein uS2 (238 aa).

This sequence belongs to the universal ribosomal protein uS2 family.

The sequence is that of Small ribosomal subunit protein uS2 from Prochlorococcus marinus (strain MIT 9211).